Here is a 284-residue protein sequence, read N- to C-terminus: Nucleotide-binding protein Shewmr4_0670 (284 aa).

8-15 is an ATP binding site; sequence GRSGSGKS. Residue 56 to 59 coordinates GTP; sequence DVRN.

The protein belongs to the RapZ-like family.

Its function is as follows. Displays ATPase and GTPase activities. This is Nucleotide-binding protein Shewmr4_0670 from Shewanella sp. (strain MR-4).